We begin with the raw amino-acid sequence, 519 residues long: Histidine ammonia-lyase (519 aa).

Residues 146–148 (ASG) constitute a cross-link (5-imidazolinone (Ala-Gly)). A 2,3-didehydroalanine (Ser) modification is found at Ser147.

It belongs to the PAL/histidase family. In terms of processing, contains an active site 4-methylidene-imidazol-5-one (MIO), which is formed autocatalytically by cyclization and dehydration of residues Ala-Ser-Gly.

The protein localises to the cytoplasm. The catalysed reaction is L-histidine = trans-urocanate + NH4(+). It functions in the pathway amino-acid degradation; L-histidine degradation into L-glutamate; N-formimidoyl-L-glutamate from L-histidine: step 1/3. This is Histidine ammonia-lyase from Psychrobacter sp. (strain PRwf-1).